The sequence spans 450 residues: MRTWIAILAVVLVLLLNACTDGPEDGPRLEHPDETGVLRVVTRNSATTYYLDRHERAVGPEVALVEAFADHRGWTVDWTVAATTAEVLDYLEAGAAHLAAAGLTHLDSRNQRFERGPAHTEITQQVVCHRDRTDKPRSPEDLEEVVLKVTAASSYVERLEVLAERYDALTFQEDQRGSEQLLMAVEEGRLACTVADSNIVRLNRRYLPHLDVTMDLTEGQNLGWYLAEGQERLAQQAFEWMNSRAGDEVIAAMENRYYTYVGEFDFVDLRALKRRMESRLPRYQRHFEQAEAETDMPADLLAALAYQESHWDPQARSPTGVRGMMMLTGRTAESLGVNDRLDPEQSIMGGARYLADRHERLPEHIPEPDRTFLALASYNVGRGHLLDARQLARDLGRDPDDWQEMREVLPLLSDERYYPNLRYGYARGYEPVHFVARIRNYRDVIRQAFE.

Residues 1–20 (MRTWIAILAVVLVLLLNACT) form the signal peptide. The non-LT domain stretch occupies residues 21–261 (DGPEDGPRLE…AMENRYYTYV (241 aa)). An LT domain region spans residues 262–450 (GEFDFVDLRA…YRDVIRQAFE (189 aa)). E308 is a catalytic residue.

In the N-terminal section; belongs to the bacterial solute-binding protein 3 family. This sequence in the C-terminal section; belongs to the transglycosylase Slt family.

It localises to the cell outer membrane. It catalyses the reaction Exolytic cleavage of the (1-&gt;4)-beta-glycosidic linkage between N-acetylmuramic acid (MurNAc) and N-acetylglucosamine (GlcNAc) residues in peptidoglycan, from either the reducing or the non-reducing ends of the peptidoglycan chains, with concomitant formation of a 1,6-anhydrobond in the MurNAc residue.. In terms of biological role, murein-degrading enzyme that degrades murein glycan strands and insoluble, high-molecular weight murein sacculi, with the concomitant formation of a 1,6-anhydromuramoyl product. Lytic transglycosylases (LTs) play an integral role in the metabolism of the peptidoglycan (PG) sacculus. Their lytic action creates space within the PG sacculus to allow for its expansion as well as for the insertion of various structures such as secretion systems and flagella. This chain is Membrane-bound lytic murein transglycosylase F 2, found in Alkalilimnicola ehrlichii (strain ATCC BAA-1101 / DSM 17681 / MLHE-1).